The sequence spans 365 residues: tRNA/tmRNA (uracil-C(5))-methyltransferase (365 aa).

Positions 189, 217, 222, 238, and 298 each coordinate S-adenosyl-L-methionine. The active-site Nucleophile is the Cys-323. The active-site Proton acceptor is the Glu-357.

Belongs to the class I-like SAM-binding methyltransferase superfamily. RNA M5U methyltransferase family. TrmA subfamily.

The catalysed reaction is uridine(54) in tRNA + S-adenosyl-L-methionine = 5-methyluridine(54) in tRNA + S-adenosyl-L-homocysteine + H(+). The enzyme catalyses uridine(341) in tmRNA + S-adenosyl-L-methionine = 5-methyluridine(341) in tmRNA + S-adenosyl-L-homocysteine + H(+). In terms of biological role, dual-specificity methyltransferase that catalyzes the formation of 5-methyluridine at position 54 (m5U54) in all tRNAs, and that of position 341 (m5U341) in tmRNA (transfer-mRNA). The protein is tRNA/tmRNA (uracil-C(5))-methyltransferase of Shewanella sp. (strain W3-18-1).